The following is a 323-amino-acid chain: Tyrosine recombinase XerD (323 aa).

The Core-binding (CB) domain maps to 21–106 (AEDDQAIQRF…TLRGFYALCL (86 aa)). Positions 127 to 317 (SLPKALTESQ…ARQHLQTLHA (191 aa)) constitute a Tyr recombinase domain. Catalysis depends on residues R167, K191, H269, R272, and H295. The active-site O-(3'-phospho-DNA)-tyrosine intermediate is Y304.

This sequence belongs to the 'phage' integrase family. XerD subfamily. Forms a cyclic heterotetrameric complex composed of two molecules of XerC and two molecules of XerD.

The protein resides in the cytoplasm. Its function is as follows. Site-specific tyrosine recombinase, which acts by catalyzing the cutting and rejoining of the recombining DNA molecules. The XerC-XerD complex is essential to convert dimers of the bacterial chromosome into monomers to permit their segregation at cell division. It also contributes to the segregational stability of plasmids. The chain is Tyrosine recombinase XerD from Xanthomonas campestris pv. campestris (strain ATCC 33913 / DSM 3586 / NCPPB 528 / LMG 568 / P 25).